The following is a 334-amino-acid chain: Malate dehydrogenase, cytoplasmic (334 aa).

11-17 is a binding site for NAD(+); that stretch reads GAAGQIA. Residues R92 and R98 each contribute to the substrate site. Residues N105, Q112, and 129–131 each bind NAD(+); that span reads VGN. Residues N131 and R162 each coordinate substrate. The active-site Proton acceptor is H187.

Belongs to the LDH/MDH superfamily. MDH type 2 family. As to quaternary structure, homodimer.

The protein localises to the cytoplasm. Its subcellular location is the cytosol. The enzyme catalyses (S)-malate + NAD(+) = oxaloacetate + NADH + H(+). It catalyses the reaction (S)-2-hydroxyglutarate + NAD(+) = 2-oxoglutarate + NADH + H(+). In terms of biological role, catalyzes the reduction of aromatic alpha-keto acids in the presence of NADH. Plays essential roles in the malate-aspartate shuttle and the tricarboxylic acid cycle, important in mitochondrial NADH supply for oxidative phosphorylation. Catalyzes the reduction of 2-oxoglutarate to 2-hydroxyglutarate, leading to elevated reactive oxygen species (ROS). This is Malate dehydrogenase, cytoplasmic (MDH1) from Gallus gallus (Chicken).